Consider the following 152-residue polypeptide: Em-like protein GEA1 (152 aa).

Basic and acidic residues-rich tracts occupy residues M1–Q17 and E32–K63. Positions M1 to K63 are disordered. 4 repeat units span residues G44–K63, G64–K83, G84–K103, and G104–K123. The 4 X 20 AA tandem repeats stretch occupies residues G44–K123. Positions G116 to K152 are disordered.

This sequence belongs to the small hydrophilic plant seed protein family. In seeds only. Specifically located to vascular bundles in the cotyledon and axis of the dry seed. Also found in the epiderm and outer layers of the cortex in the embryo axis.

In terms of biological role, it is thought to provide protection for the cytoplasm during the desiccation stage of embryo development. This is Em-like protein GEA1 (EM1) from Arabidopsis thaliana (Mouse-ear cress).